A 227-amino-acid polypeptide reads, in one-letter code: Cytochrome c oxidase subunit 2 (227 aa).

Residues 1-14 (MAYPFQLGLQDATS) lie on the Mitochondrial intermembrane side of the membrane. Residues 15 to 45 (PIMEELTNFHDHTLMIVFLISSLVLYIISLM) form a helical membrane-spanning segment. At 46–59 (LTTKLTHTSTMDAQ) the chain is on the mitochondrial matrix side. Residues 60-87 (EVETIWTILPAVILILIALPSLRILYMM) form a helical membrane-spanning segment. At 88–227 (DEINNPALTV…YFENWSASMI (140 aa)) the chain is on the mitochondrial intermembrane side. Cu cation is bound by residues H161, C196, E198, C200, H204, and M207. E198 is a Mg(2+) binding site. Y218 is subject to Phosphotyrosine.

The protein belongs to the cytochrome c oxidase subunit 2 family. In terms of assembly, component of the cytochrome c oxidase (complex IV, CIV), a multisubunit enzyme composed of 14 subunits. The complex is composed of a catalytic core of 3 subunits MT-CO1, MT-CO2 and MT-CO3, encoded in the mitochondrial DNA, and 11 supernumerary subunits COX4I, COX5A, COX5B, COX6A, COX6B, COX6C, COX7A, COX7B, COX7C, COX8 and NDUFA4, which are encoded in the nuclear genome. The complex exists as a monomer or a dimer and forms supercomplexes (SCs) in the inner mitochondrial membrane with NADH-ubiquinone oxidoreductase (complex I, CI) and ubiquinol-cytochrome c oxidoreductase (cytochrome b-c1 complex, complex III, CIII), resulting in different assemblies (supercomplex SCI(1)III(2)IV(1) and megacomplex MCI(2)III(2)IV(2)). Found in a complex with TMEM177, COA6, COX18, COX20, SCO1 and SCO2. Interacts with TMEM177 in a COX20-dependent manner. Interacts with COX20. Interacts with COX16. Cu cation serves as cofactor.

The protein localises to the mitochondrion inner membrane. It catalyses the reaction 4 Fe(II)-[cytochrome c] + O2 + 8 H(+)(in) = 4 Fe(III)-[cytochrome c] + 2 H2O + 4 H(+)(out). In terms of biological role, component of the cytochrome c oxidase, the last enzyme in the mitochondrial electron transport chain which drives oxidative phosphorylation. The respiratory chain contains 3 multisubunit complexes succinate dehydrogenase (complex II, CII), ubiquinol-cytochrome c oxidoreductase (cytochrome b-c1 complex, complex III, CIII) and cytochrome c oxidase (complex IV, CIV), that cooperate to transfer electrons derived from NADH and succinate to molecular oxygen, creating an electrochemical gradient over the inner membrane that drives transmembrane transport and the ATP synthase. Cytochrome c oxidase is the component of the respiratory chain that catalyzes the reduction of oxygen to water. Electrons originating from reduced cytochrome c in the intermembrane space (IMS) are transferred via the dinuclear copper A center (CU(A)) of subunit 2 and heme A of subunit 1 to the active site in subunit 1, a binuclear center (BNC) formed by heme A3 and copper B (CU(B)). The BNC reduces molecular oxygen to 2 water molecules using 4 electrons from cytochrome c in the IMS and 4 protons from the mitochondrial matrix. The protein is Cytochrome c oxidase subunit 2 (MT-CO2) of Oenomys hypoxanthus (Rufous-nosed rat).